The following is a 308-amino-acid chain: Beta-1,3-galactosyltransferase 5 (308 aa).

Residues 1–7 are Cytoplasmic-facing; that stretch reads MAHMKTR. Residues 8 to 25 form a helical; Signal-anchor for type II membrane protein membrane-spanning segment; that stretch reads LVYASILMMGALCLYFSM. The Lumenal portion of the chain corresponds to 26 to 308; that stretch reads DSFRELPFVF…NSKEQDCPAV (283 aa). Asn-128, Asn-172, and Asn-229 each carry an N-linked (GlcNAc...) asparagine glycan.

This sequence belongs to the glycosyltransferase 31 family. As to expression, expressed in brain and kidney.

The protein resides in the golgi apparatus membrane. It carries out the reaction a globoside Gb4Cer (d18:1(4E)) + UDP-alpha-D-galactose = a globoside GalGb4Cer (d18:1(4E)) + UDP + H(+). Its pathway is protein modification; protein glycosylation. Catalyzes the transfer of Gal to GlcNAc-based acceptors with a preference for the core3 O-linked glycan GlcNAc(beta1,3)GalNAc structure. Can use glycolipid LC3Cer as an efficient acceptor. Also catalyzes the transfer of Gal to the terminal GalNAc unit of the globoside GB4, thereby synthesizing the glycolipid GB5, also known as the stage-specific embryonic antigen-3 (SSEA-3). The protein is Beta-1,3-galactosyltransferase 5 of Mus musculus (Mouse).